The sequence spans 591 residues: MKTGKIIKVSGPLVVAEGMDEANVYDVVKVGEKGLIGEIIEMRGDKASIQVYEETSGIGPGDPVITTGEPLSVELGPGLIESMFDGIQRPLDAFMKAANSAFLSKGVEVKSLNREKKWPFVPTAKVGDKVSAGDVIGTVQETAVVLHRIMVPFGVEGTIKEIKAGDFNVEEVIAVVETEKGDKNLTLMQKWPVRKGRPYARKLNPVEPMTTGQRVIDTFFPVAKGGAAAVPGPFGAGKTVVQHQVAKWGDTEIVVYVGCGERGNEMTDVLNEFPELKDPKTGESLMKRTVLIANTSNMPVAAREASIYTGITIAEYFRDMGYSVSIMADSTSRWAEALREMSGRLEEMPGDEGYPAYLGSRLADYYERAGKVVALGKDGREGAVTAIGAVSPPGGDISEPVTQSTLRIVKVFWGLDAQLAYKRHFPSINWLTSYSLYLEKMGEWMDAHVADDWSALRTEAMALLQEEANLEEIVRLVGMDALSEGDRLKLEVAKSIREDYLQQNAFHENDTYTSLNKQYKMLNLILSFKHEAEKALEAGVYLDKVLKLPVRDRIARSKYISEEEISKMDDILVELKSEMNKLISEGGVLNA.

232–239 provides a ligand contact to ATP; it reads GPFGAGKT.

It belongs to the ATPase alpha/beta chains family.

The enzyme catalyses ATP + H2O + 4 H(+)(in) = ADP + phosphate + 5 H(+)(out). Its function is as follows. Produces ATP from ADP in the presence of a proton gradient across the membrane. The V-type alpha chain is a catalytic subunit. This is V-type ATP synthase alpha chain from Clostridium perfringens (strain ATCC 13124 / DSM 756 / JCM 1290 / NCIMB 6125 / NCTC 8237 / Type A).